A 562-amino-acid polypeptide reads, in one-letter code: Tetratricopeptide repeat protein 39A (562 aa).

TPR repeat units follow at residues 273–306 (AIFLFFAGRIEEIKGNIDEAISRFEECCESQQNW), 463–496 (CVVKLLKGLCYKYLGRIPEAVESFSYIQLNEKRI), and 504–537 (PNAMLELALLYLQLEKKEEALRLLENAKNNYKNY).

Belongs to the TTC39 family.

The polypeptide is Tetratricopeptide repeat protein 39A (ttc39a) (Xenopus tropicalis (Western clawed frog)).